The following is a 481-amino-acid chain: Sphingosine kinase 2 (481 aa).

Residues 111 to 253 (GRPKRLLVFV…VDVATIAQGN (143 aa)) form the DAGKc domain. ATP contacts are provided by residues 121 to 123 (NPF) and Thr153. 178 to 181 (SGDG) is a binding site for substrate. Catalysis depends on Asp180, which acts as the Proton donor/acceptor. ATP is bound by residues Glu185 and 210–212 (GTG). Residue Asp271 participates in substrate binding. ATP contacts are provided by residues Arg278, Arg284, and 441-443 (DGE).

Requires Mg(2+) as cofactor. As to expression, highly expressed in flowers and siliques and at lower levels in roots, leaves and stems.

It is found in the vacuole membrane. It catalyses the reaction a sphingoid base + ATP = a sphingoid 1-phosphate + ADP + H(+). Activated by phosphatidic acid (PA). Binding with PA stimulates the activity by promoting the binding of substrate to the catalytic site. Functionally, involved in the production of sphingolipid metabolites. Phosphorylates sphingosine and various l sphingoid long-chain base (LCB) products, such as phytosphingosine (PHS, 4-hydroxysphinganine), 4-hydroxy-8-sphingenine, 4,8-sphingadienine and D-erythro-dihydrosphingosine, but has a very few activity toward D,L-threo- dihydrosphingosine. Is required for abscisic acid (ABA) signaling that mediates stomatal closure, inhibition of seed germination and root elongation. May function upstream of PLDALPHA1 and phosphatidic acid (PA) in an amplification response to ABA that mediates stomatal closure. The protein is Sphingosine kinase 2 (SPHK2) of Arabidopsis thaliana (Mouse-ear cress).